The following is a 196-amino-acid chain: Imidazoleglycerol-phosphate dehydratase (196 aa).

It belongs to the imidazoleglycerol-phosphate dehydratase family.

It localises to the cytoplasm. The catalysed reaction is D-erythro-1-(imidazol-4-yl)glycerol 3-phosphate = 3-(imidazol-4-yl)-2-oxopropyl phosphate + H2O. It functions in the pathway amino-acid biosynthesis; L-histidine biosynthesis; L-histidine from 5-phospho-alpha-D-ribose 1-diphosphate: step 6/9. This Desulforamulus reducens (strain ATCC BAA-1160 / DSM 100696 / MI-1) (Desulfotomaculum reducens) protein is Imidazoleglycerol-phosphate dehydratase.